The following is a 501-amino-acid chain: Acetyl-coenzyme A carboxylase carboxyl transferase subunit beta, chloroplastic (501 aa).

The CoA carboxyltransferase N-terminal domain maps to 231-501; the sequence is LWIECENCYG…LIQNEKESRS (271 aa). Positions 235, 238, 254, and 257 each coordinate Zn(2+). Residues 235–257 form a C4-type zinc finger; sequence CENCYGLNYKKILKSKMNICEHC.

Belongs to the AccD/PCCB family. As to quaternary structure, acetyl-CoA carboxylase is a heterohexamer composed of biotin carboxyl carrier protein, biotin carboxylase and 2 subunits each of ACCase subunit alpha and ACCase plastid-coded subunit beta (accD). Zn(2+) serves as cofactor.

It is found in the plastid. The protein localises to the chloroplast stroma. It carries out the reaction N(6)-carboxybiotinyl-L-lysyl-[protein] + acetyl-CoA = N(6)-biotinyl-L-lysyl-[protein] + malonyl-CoA. It participates in lipid metabolism; malonyl-CoA biosynthesis; malonyl-CoA from acetyl-CoA: step 1/1. In terms of biological role, component of the acetyl coenzyme A carboxylase (ACC) complex. Biotin carboxylase (BC) catalyzes the carboxylation of biotin on its carrier protein (BCCP) and then the CO(2) group is transferred by the transcarboxylase to acetyl-CoA to form malonyl-CoA. The sequence is that of Acetyl-coenzyme A carboxylase carboxyl transferase subunit beta, chloroplastic from Lotus japonicus (Lotus corniculatus var. japonicus).